The following is a 908-amino-acid chain: Probable RNA-directed DNA polymerase from transposon X-element (908 aa).

The 272-residue stretch at Ala481–Leu752 folds into the Reverse transcriptase domain. The interval Arg883 to Ser908 is disordered.

Mg(2+) serves as cofactor. Requires Mn(2+) as cofactor.

The enzyme catalyses DNA(n) + a 2'-deoxyribonucleoside 5'-triphosphate = DNA(n+1) + diphosphate. The chain is Probable RNA-directed DNA polymerase from transposon X-element (X-element\ORF2) from Drosophila melanogaster (Fruit fly).